The sequence spans 196 residues: Putative archaetidylserine decarboxylase proenzyme (196 aa).

Ser-164 acts as the Schiff-base intermediate with substrate; via pyruvic acid in catalysis. Ser-164 is subject to Pyruvic acid (Ser); by autocatalysis.

Belongs to the phosphatidylserine decarboxylase family. PSD-A subfamily. As to quaternary structure, heterodimer of a large membrane-associated beta subunit and a small pyruvoyl-containing alpha subunit. It depends on pyruvate as a cofactor. In terms of processing, is synthesized initially as an inactive proenzyme. Formation of the active enzyme involves a self-maturation process in which the active site pyruvoyl group is generated from an internal serine residue via an autocatalytic post-translational modification. Two non-identical subunits are generated from the proenzyme in this reaction, and the pyruvate is formed at the N-terminus of the alpha chain, which is derived from the carboxyl end of the proenzyme. The post-translation cleavage follows an unusual pathway, termed non-hydrolytic serinolysis, in which the side chain hydroxyl group of the serine supplies its oxygen atom to form the C-terminus of the beta chain, while the remainder of the serine residue undergoes an oxidative deamination to produce ammonia and the pyruvoyl prosthetic group on the alpha chain.

The protein localises to the cell membrane. It catalyses the reaction archaetidylserine + H(+) = archaetidylethanolamine + CO2. Functionally, catalyzes the formation of archaetidylethanolamine (PtdEtn) from archaetidylserine (PtdSer). The protein is Putative archaetidylserine decarboxylase proenzyme of Halobacterium salinarum (strain ATCC 700922 / JCM 11081 / NRC-1) (Halobacterium halobium).